We begin with the raw amino-acid sequence, 351 residues long: N6-Methyl-AMP deaminase (351 aa).

Positions 23 and 25 each coordinate Zn(2+). Residues histidine 25, asparagine 27, histidine 73, 105-108 (STPR), aspartate 147, and glycine 180 contribute to the N(6)-methyl-AMP site. Histidine 207 lines the Zn(2+) pocket. N(6)-methyl-AMP contacts are provided by glutamate 210, aspartate 292, and aspartate 293. Catalysis depends on glutamate 210, which acts as the Proton donor. Aspartate 292 contributes to the Zn(2+) binding site.

It belongs to the metallo-dependent hydrolases superfamily. Adenosine and AMP deaminases family. As to quaternary structure, monomer. Requires Zn(2+) as cofactor.

It carries out the reaction N(6)-methyl-AMP + H2O + H(+) = IMP + methylamine. In terms of biological role, catalyzes the hydrolysis of the free cytosolic methylated adenosine nucleotide N(6)-methyl-AMP (N6-mAMP) to produce inositol monophosphate (IMP) and methylamine. Is required for the catabolism of cytosolic N6-mAMP, which is derived from the degradation of mRNA containing N6-methylated adenine (m6A). This Bos taurus (Bovine) protein is N6-Methyl-AMP deaminase.